The chain runs to 640 residues: GATA zinc finger domain-containing protein 12 (640 aa).

2 disordered regions span residues Ser-121–Ile-209 and Gln-355–Asn-390. 2 stretches are compositionally biased toward low complexity: residues Asn-122 to Ile-209 and Gln-355 to Gln-379. A compositionally biased stretch (polar residues) spans Pro-380–Asn-390. A GATA-type zinc finger spans residues Cys-506 to Cys-531.

This chain is GATA zinc finger domain-containing protein 12 (gtaL), found in Dictyostelium discoideum (Social amoeba).